The chain runs to 148 residues: Cytochrome c-type biogenesis protein CcmE (148 aa).

The Cytoplasmic segment spans residues Met-1–Lys-7. A helical; Signal-anchor for type II membrane protein membrane pass occupies residues Leu-8–Ala-28. At Phe-29–Gln-148 the chain is on the periplasmic side. Positions 123 and 127 each coordinate heme.

The protein belongs to the CcmE/CycJ family.

The protein localises to the cell inner membrane. Heme chaperone required for the biogenesis of c-type cytochromes. Transiently binds heme delivered by CcmC and transfers the heme to apo-cytochromes in a process facilitated by CcmF and CcmH. In Nitrosospira multiformis (strain ATCC 25196 / NCIMB 11849 / C 71), this protein is Cytochrome c-type biogenesis protein CcmE.